Here is a 166-residue protein sequence, read N- to C-terminus: SsrA-binding protein (166 aa).

Residues 146–166 form a disordered region; the sequence is KRAAEKEKQSKKDVKAAMERY.

The protein belongs to the SmpB family.

Its subcellular location is the cytoplasm. In terms of biological role, required for rescue of stalled ribosomes mediated by trans-translation. Binds to transfer-messenger RNA (tmRNA), required for stable association of tmRNA with ribosomes. tmRNA and SmpB together mimic tRNA shape, replacing the anticodon stem-loop with SmpB. tmRNA is encoded by the ssrA gene; the 2 termini fold to resemble tRNA(Ala) and it encodes a 'tag peptide', a short internal open reading frame. During trans-translation Ala-aminoacylated tmRNA acts like a tRNA, entering the A-site of stalled ribosomes, displacing the stalled mRNA. The ribosome then switches to translate the ORF on the tmRNA; the nascent peptide is terminated with the 'tag peptide' encoded by the tmRNA and targeted for degradation. The ribosome is freed to recommence translation, which seems to be the essential function of trans-translation. This is SsrA-binding protein from Synechococcus sp. (strain CC9605).